The following is a 424-amino-acid chain: Glutamyl-tRNA reductase (424 aa).

Substrate contacts are provided by residues 49-52 (TCNR), S108, 113-115 (EPQ), and Q119. C50 functions as the Nucleophile in the catalytic mechanism. 188–193 (GAGETI) is an NADP(+) binding site.

It belongs to the glutamyl-tRNA reductase family. Homodimer.

The enzyme catalyses (S)-4-amino-5-oxopentanoate + tRNA(Glu) + NADP(+) = L-glutamyl-tRNA(Glu) + NADPH + H(+). It participates in porphyrin-containing compound metabolism; protoporphyrin-IX biosynthesis; 5-aminolevulinate from L-glutamyl-tRNA(Glu): step 1/2. Catalyzes the NADPH-dependent reduction of glutamyl-tRNA(Glu) to glutamate 1-semialdehyde (GSA). This Hahella chejuensis (strain KCTC 2396) protein is Glutamyl-tRNA reductase.